We begin with the raw amino-acid sequence, 119 residues long: Immunoglobulin heavy variable 3-72 (119 aa).

Positions 1-19 (MEFGLSWVFLVVILQGVQC) are cleaved as a signal peptide. Residues 20 to 44 (EVQLVESGGGLVQPGGSLRLSCAAS) are framework-1. Residues 20–119 (EVQLVESGGG…EDTAVYYCAR (100 aa)) enclose the Ig-like domain. A disulfide bridge connects residues cysteine 41 and cysteine 117. The tract at residues 45-52 (GFTFSDHY) is complementarity-determining-1. The interval 53 to 69 (MDWVRQAPGKGLEWVGR) is framework-2. Residues 70–79 (TRNKANSYTT) are complementarity-determining-2. The tract at residues 80-117 (EYAASVKGRFTISRDDSKNSLYLQMNSLKTEDTAVYYC) is framework-3. The segment at 118–119 (AR) is complementarity-determining-3.

As to quaternary structure, immunoglobulins are composed of two identical heavy chains and two identical light chains; disulfide-linked.

The protein resides in the secreted. The protein localises to the cell membrane. In terms of biological role, v region of the variable domain of immunoglobulin heavy chains that participates in the antigen recognition. Immunoglobulins, also known as antibodies, are membrane-bound or secreted glycoproteins produced by B lymphocytes. In the recognition phase of humoral immunity, the membrane-bound immunoglobulins serve as receptors which, upon binding of a specific antigen, trigger the clonal expansion and differentiation of B lymphocytes into immunoglobulins-secreting plasma cells. Secreted immunoglobulins mediate the effector phase of humoral immunity, which results in the elimination of bound antigens. The antigen binding site is formed by the variable domain of one heavy chain, together with that of its associated light chain. Thus, each immunoglobulin has two antigen binding sites with remarkable affinity for a particular antigen. The variable domains are assembled by a process called V-(D)-J rearrangement and can then be subjected to somatic hypermutations which, after exposure to antigen and selection, allow affinity maturation for a particular antigen. This chain is Immunoglobulin heavy variable 3-72, found in Homo sapiens (Human).